The following is a 785-amino-acid chain: LPS-assembly protein LptD (785 aa).

The signal sequence occupies residues 1-58 (MSCSCLCMSLYRGADRIGRFYTAHCPQDMALCMHRQKLNPLALALAAAFALNAPAALA).

Belongs to the LptD family. As to quaternary structure, component of the lipopolysaccharide transport and assembly complex. Interacts with LptE and LptA.

Its subcellular location is the cell outer membrane. Together with LptE, is involved in the assembly of lipopolysaccharide (LPS) at the surface of the outer membrane. In Chromobacterium violaceum (strain ATCC 12472 / DSM 30191 / JCM 1249 / CCUG 213 / NBRC 12614 / NCIMB 9131 / NCTC 9757 / MK), this protein is LPS-assembly protein LptD.